Reading from the N-terminus, the 192-residue chain is MRIERVSTDQFKIFLTFDDLIERGFTREDLWHDASNVRSLFSDMMYEASSELGIELEGMLLVQVHLMQAQGMHIFVTQQYEDNSEDEDYIEMKVTLDESKELIFSFMDFEDIISVTSYLDPMGLENIRLYYMEDRYYMILDHIELSRVDKEDIIGVMSEYANPSIVTSHRIEEYGKLIMEENTVQQIKRFFY.

The protein belongs to the MecA family. As to quaternary structure, homodimer.

Its function is as follows. Enables the recognition and targeting of unfolded and aggregated proteins to the ClpC protease or to other proteins involved in proteolysis. Acts negatively in the development of competence by binding ComK and recruiting it to the ClpCP protease. When overexpressed, inhibits sporulation. Also involved in Spx degradation by ClpC. The chain is Adapter protein MecA from Oceanobacillus iheyensis (strain DSM 14371 / CIP 107618 / JCM 11309 / KCTC 3954 / HTE831).